A 510-amino-acid polypeptide reads, in one-letter code: ATP synthase subunit alpha (510 aa).

Position 170-177 (170-177) interacts with ATP; the sequence is GDRQTGKT.

The protein belongs to the ATPase alpha/beta chains family. In terms of assembly, F-type ATPases have 2 components, CF(1) - the catalytic core - and CF(0) - the membrane proton channel. CF(1) has five subunits: alpha(3), beta(3), gamma(1), delta(1), epsilon(1). CF(0) has three main subunits: a(1), b(2) and c(9-12). The alpha and beta chains form an alternating ring which encloses part of the gamma chain. CF(1) is attached to CF(0) by a central stalk formed by the gamma and epsilon chains, while a peripheral stalk is formed by the delta and b chains.

The protein localises to the cell inner membrane. It catalyses the reaction ATP + H2O + 4 H(+)(in) = ADP + phosphate + 5 H(+)(out). Produces ATP from ADP in the presence of a proton gradient across the membrane. The alpha chain is a regulatory subunit. This is ATP synthase subunit alpha from Caulobacter sp. (strain K31).